The sequence spans 202 residues: Imidazoleglycerol-phosphate dehydratase (202 aa).

Belongs to the imidazoleglycerol-phosphate dehydratase family.

It is found in the cytoplasm. It catalyses the reaction D-erythro-1-(imidazol-4-yl)glycerol 3-phosphate = 3-(imidazol-4-yl)-2-oxopropyl phosphate + H2O. Its pathway is amino-acid biosynthesis; L-histidine biosynthesis; L-histidine from 5-phospho-alpha-D-ribose 1-diphosphate: step 6/9. The sequence is that of Imidazoleglycerol-phosphate dehydratase from Rhizobium etli (strain ATCC 51251 / DSM 11541 / JCM 21823 / NBRC 15573 / CFN 42).